A 692-amino-acid chain; its full sequence is Putative ESX-1 scaffolding and assembly protein SaeA (692 aa).

Positions 1–21 are enriched in basic and acidic residues; sequence MGERGELVSDLHPSDDHDADP. 2 disordered regions span residues 1 to 23 and 87 to 134; these read MGERGELVSDLHPSDDHDADPRL and PAAP…TTGF. The segment covering 89-107 has biased composition (pro residues); that stretch reads APEPDPPPVPEPQPEPEPG.

It is found in the cytoplasm. Its function is as follows. May be involved in assembly of the ESX-1 / type VII specialized secretion system (T7SS), which exports several proteins including EsxA and EsxB. Involved in DNA conjugation in recipient (MKD8) but not donor (mc(2)155) strain. In Mycolicibacterium smegmatis (strain ATCC 700084 / mc(2)155) (Mycobacterium smegmatis), this protein is Putative ESX-1 scaffolding and assembly protein SaeA.